A 160-amino-acid chain; its full sequence is Protein Bel-3 (160 aa).

As to quaternary structure, homodimer.

Its subcellular location is the host cytoplasm. This is Protein Bel-3 (bel3) from Human spumaretrovirus (SFVcpz(hu)).